A 41-amino-acid polypeptide reads, in one-letter code: MGGKKSHFLGRRIEGTGRGVVPFVRKLSEVVKKITADGKKC.

This is an uncharacterized protein from Treponema pallidum (strain Nichols).